Here is a 76-residue protein sequence, read N- to C-terminus: Kappa-actitoxin-Avd4d (76 aa).

The first 19 residues, 1-19, serve as a signal peptide directing secretion; sequence MNKALFLCLVVLCAAVVFA. Positions 20–31 are excised as a propeptide; sequence AEDLQKAKHVPF. Intrachain disulfides connect Cys37/Cys72, Cys39/Cys65, and Cys55/Cys73.

The protein belongs to the sea anemone type 3 (BDS) potassium channel toxin family. As to expression, moderately expressed in the ectodermal tissue from the distal and proximal tentacles, body wall, and oral disk.

It is found in the secreted. Its subcellular location is the nematocyst. In terms of biological role, blocks Kv3 voltage-gated potassium channels. Reduces blood pressure. The chain is Kappa-actitoxin-Avd4d from Anemonia viridis (Snakelocks anemone).